Reading from the N-terminus, the 74-residue chain is MKNTINIQDQFLNQLRKEETTVTVFLLNGFQLRGLVKGFDNFTVLLEVDGRQQLIYKHAISTFAPQKNVKIEIE.

A Sm domain is found at aspartate 9–valine 69.

Belongs to the Hfq family. Homohexamer.

In terms of biological role, RNA chaperone that binds small regulatory RNA (sRNAs) and mRNAs to facilitate mRNA translational regulation in response to envelope stress, environmental stress and changes in metabolite concentrations. Also binds with high specificity to tRNAs. This Anoxybacillus flavithermus (strain DSM 21510 / WK1) protein is RNA-binding protein Hfq.